We begin with the raw amino-acid sequence, 554 residues long: uncharacterized protein (554 aa).

This sequence to M.jannaschii MJ0047, MJ0162 and MJ1236.

This is an uncharacterized protein from Synechocystis sp. (strain ATCC 27184 / PCC 6803 / Kazusa).